The following is a 143-amino-acid chain: Transcriptional regulator MraZ (143 aa).

SpoVT-AbrB domains are found at residues 5–47 (TYTP…PRDE) and 76–119 (TDEQ…DAQA).

It belongs to the MraZ family. Forms oligomers.

The protein localises to the cytoplasm. Its subcellular location is the nucleoid. This chain is Transcriptional regulator MraZ, found in Mycolicibacterium smegmatis (strain ATCC 700084 / mc(2)155) (Mycobacterium smegmatis).